The primary structure comprises 359 residues: tRNA-specific 2-thiouridylase MnmA (359 aa).

Residues 7–14 (AMSGGVDS) and M33 contribute to the ATP site. The active-site Nucleophile is the C101. An intrachain disulfide couples C101 to C198. G125 provides a ligand contact to ATP. The tract at residues 148–150 (KDQ) is interaction with tRNA. Residue C198 is the Cysteine persulfide intermediate of the active site.

The protein belongs to the MnmA/TRMU family.

It is found in the cytoplasm. It carries out the reaction S-sulfanyl-L-cysteinyl-[protein] + uridine(34) in tRNA + AH2 + ATP = 2-thiouridine(34) in tRNA + L-cysteinyl-[protein] + A + AMP + diphosphate + H(+). In terms of biological role, catalyzes the 2-thiolation of uridine at the wobble position (U34) of tRNA, leading to the formation of s(2)U34. The chain is tRNA-specific 2-thiouridylase MnmA from Chloroflexus aurantiacus (strain ATCC 29366 / DSM 635 / J-10-fl).